Here is a 526-residue protein sequence, read N- to C-terminus: O-phosphoserine--tRNA(Cys) ligase (526 aa).

Substrate-binding positions include 189–191, 234–236, 276–277, and asparagine 319; these read HMT, SAS, and YY.

This sequence belongs to the class-II aminoacyl-tRNA synthetase family. O-phosphoseryl-tRNA(Cys) synthetase subfamily. In terms of assembly, homotetramer. Interacts with SepCysS.

The catalysed reaction is tRNA(Cys) + O-phospho-L-serine + ATP = O-phospho-L-seryl-tRNA(Cys) + AMP + diphosphate. Catalyzes the attachment of O-phosphoserine (Sep) to tRNA(Cys). This chain is O-phosphoserine--tRNA(Cys) ligase, found in Methanocorpusculum labreanum (strain ATCC 43576 / DSM 4855 / Z).